Consider the following 757-residue polypeptide: MDVNPTLLFLKVPAQNAISTTFPYTGDPPYSHGTGTGYTMDTVNRTHQYSERGRWTKNTETGAPQLNPIDGPLPKDNEPSGYAQTDCVLEAMAFLEESHPGIFENSCIETMEVVQQTRVDKLTQGRQTYDWTLNRNQPAATALANTIEVFRSNGLIANESGRLIDFLKDVMESMDRDEIEVTTHFQRKRRVRDNVTKKMVTQRTIGKKKHKLDKRSYLIRALTLNTMTKDAERGKLKRRAIATPGMQIRGFVYFVETLARSICEKLEQSGLPVGGNEKKAKLANVVRKMMTNSQDTEISFTITGDNTKWNENQNPRMFLAMITYITKNQPEWFRNILSIAPIMFSNKMARLGKGYMFESKSMKLRTQIPAEMLANIDLKYFNDSTKKKIEKIRPLLIDGTASLSPGMMMGMFNMLSTVLGVSILNLGQKRYTKTTYWWDGLQSSDDFALIVNAPNYAGIQAGVDRFYRTCKLLGINMSKKKSYINKTGTFEFTSFFYRYGFVANFSMELPSFGVSGVNESADMSIGVTVIKNNMINNDLGPATAQMALQLFIKDYRYTYRCHRGDTQIQTRRSFEIKKLWDQTRSKAGLLVSDGGPNLYNIRNLHIPEVCLKWELMDEDYQGRLCNPLNPFVSHKEIESVNNAVMMPAHGPAKNMEYDAVATTHSWVPKRNRSILNTSQRGILEDEQMYQRCCNLFEKFFPSSSYRRPVGISSMVEAMVSRARIDARIDFESGRTKKEEFAEIMKTCSTIEDLRRQK.

The interval 53-82 (GRWTKNTETGAPQLNPIDGPLPKDNEPSGY) is disordered. 2 consecutive short sequence motifs (nuclear localization signal) follow at residues 187–195 (RKRRVRDNV) and 203–216 (RTIGKKKHKLDKRS). The segment at 249–256 (RGFVYFVE) is promoter-binding site. Residues 286–483 (VRKMMTNSQD…GINMSKKKSY (198 aa)) enclose the RdRp catalytic domain.

This sequence belongs to the influenza viruses polymerase PB1 family. As to quaternary structure, influenza RNA polymerase is composed of three subunits: PB1, PB2 and PA. Interacts (via N-terminus) with PA (via C-terminus). Interacts (via C-terminus) with PB2 (via N-terminus); this interaction is essential for transcription initiation. Interacts (via C-terminus) with human PKP2 (via N-terminus); the interaction competitively inhibits the interaction between the RNA polymerase subunits PB1 and PB2. Phosphorylated by host PRKCA.

It localises to the host nucleus. The protein resides in the host cytoplasm. It carries out the reaction RNA(n) + a ribonucleoside 5'-triphosphate = RNA(n+1) + diphosphate. In terms of biological role, RNA-dependent RNA polymerase which is responsible for replication and transcription of virus RNA segments. The transcription of viral mRNAs occurs by a unique mechanism called cap-snatching. 5' methylated caps of cellular mRNAs are cleaved after 10-13 nucleotides by PA. In turn, these short capped RNAs are used as primers by PB1 for transcription of viral mRNAs. During virus replication, PB1 initiates RNA synthesis and copy vRNA into complementary RNA (cRNA) which in turn serves as a template for the production of more vRNAs. This is RNA-directed RNA polymerase catalytic subunit from Influenza A virus (strain A/New Zealand:South Canterbury/35/2000 H1N1).